The sequence spans 199 residues: 3-isopropylmalate dehydratase small subunit (199 aa).

This sequence belongs to the LeuD family. LeuD type 1 subfamily. In terms of assembly, heterodimer of LeuC and LeuD.

It carries out the reaction (2R,3S)-3-isopropylmalate = (2S)-2-isopropylmalate. It participates in amino-acid biosynthesis; L-leucine biosynthesis; L-leucine from 3-methyl-2-oxobutanoate: step 2/4. Catalyzes the isomerization between 2-isopropylmalate and 3-isopropylmalate, via the formation of 2-isopropylmaleate. In Aeromonas salmonicida (strain A449), this protein is 3-isopropylmalate dehydratase small subunit.